A 735-amino-acid chain; its full sequence is Ion-translocating oxidoreductase complex subunit C (735 aa).

4Fe-4S ferredoxin-type domains lie at 368–397 (MGAP…QQLY) and 407–436 (KATA…VQYF). [4Fe-4S] cluster-binding residues include cysteine 377, cysteine 380, cysteine 383, cysteine 387, cysteine 416, cysteine 419, cysteine 422, and cysteine 426. Residues 562 to 713 (AIARAKARKQ…AEPADPRKAA (152 aa)) form a disordered region.

It belongs to the 4Fe4S bacterial-type ferredoxin family. RnfC subfamily. In terms of assembly, the complex is composed of six subunits: RsxA, RsxB, RsxC, RsxD, RsxE and RsxG. [4Fe-4S] cluster is required as a cofactor.

The protein localises to the cell inner membrane. Its function is as follows. Part of a membrane-bound complex that couples electron transfer with translocation of ions across the membrane. Required to maintain the reduced state of SoxR. The chain is Ion-translocating oxidoreductase complex subunit C from Salmonella newport (strain SL254).